The following is a 269-amino-acid chain: Formamidopyrimidine-DNA glycosylase (269 aa).

P2 (schiff-base intermediate with DNA) is an active-site residue. The active-site Proton donor is the E3. K57 (proton donor; for beta-elimination activity) is an active-site residue. DNA contacts are provided by H90, R109, and R150. The FPG-type zinc-finger motif lies at 235 to 269; that stretch reads QVYGRAGEACLTCGTTIKRSKHGQRTTFYCPHCQR. The active-site Proton donor; for delta-elimination activity is R259.

This sequence belongs to the FPG family. Monomer. Zn(2+) serves as cofactor.

It catalyses the reaction Hydrolysis of DNA containing ring-opened 7-methylguanine residues, releasing 2,6-diamino-4-hydroxy-5-(N-methyl)formamidopyrimidine.. It carries out the reaction 2'-deoxyribonucleotide-(2'-deoxyribose 5'-phosphate)-2'-deoxyribonucleotide-DNA = a 3'-end 2'-deoxyribonucleotide-(2,3-dehydro-2,3-deoxyribose 5'-phosphate)-DNA + a 5'-end 5'-phospho-2'-deoxyribonucleoside-DNA + H(+). Its function is as follows. Involved in base excision repair of DNA damaged by oxidation or by mutagenic agents. Acts as a DNA glycosylase that recognizes and removes damaged bases. Has a preference for oxidized purines, such as 7,8-dihydro-8-oxoguanine (8-oxoG). Has AP (apurinic/apyrimidinic) lyase activity and introduces nicks in the DNA strand. Cleaves the DNA backbone by beta-delta elimination to generate a single-strand break at the site of the removed base with both 3'- and 5'-phosphates. The chain is Formamidopyrimidine-DNA glycosylase from Edwardsiella ictaluri (strain 93-146).